A 356-amino-acid chain; its full sequence is sn-glycerol-3-phosphate import ATP-binding protein UgpC (356 aa).

Residues 4–235 (LKLQAVTKSW…PASRFVASFI (232 aa)) form the ABC transporter domain. 37-44 (GPSGCGKS) provides a ligand contact to ATP.

It belongs to the ABC transporter superfamily. sn-glycerol-3-phosphate importer (TC 3.A.1.1.3) family. The complex is composed of two ATP-binding proteins (UgpC), two transmembrane proteins (UgpA and UgpE) and a solute-binding protein (UgpB).

It localises to the cell inner membrane. It carries out the reaction sn-glycerol 3-phosphate(out) + ATP + H2O = sn-glycerol 3-phosphate(in) + ADP + phosphate + H(+). Functionally, part of the ABC transporter complex UgpBAEC involved in sn-glycerol-3-phosphate (G3P) import. Responsible for energy coupling to the transport system. This is sn-glycerol-3-phosphate import ATP-binding protein UgpC from Salmonella paratyphi A (strain ATCC 9150 / SARB42).